The following is a 442-amino-acid chain: MIILFDFFDKKSKDLYYSLITSGLHGNAVVINDDGFLPQNINSPYSFFCNMEGKNGNPLYFNQVPLPDLWEIKGNNIEAEIWDFSIKRAKIFYQEPKYKRQVKNIDWFDNNKKVRYTDHYNRFGWCFARTHFDKNQNVTTKSYFDKDGKEVIVENFRTGVIILNWLNKDYFFDNRVAFLNFYFSLMGWNLSRIWYNSLSTPFFVSYRMTYPGEDILFWQEDIEDTIPANMRVLLESTNTRTQKVIVQKKNTYHKIKSMLPKEQQEKIGYLGFIYPNKKNNKGRKDIFILTNSDQIEHLEVLVHHLSDYHFHIAAYTEMSFKLMSFSQEQNVTLYPNISRTDLDNLFEICDIYFDINHGNEVDDVIRRAFEYNHLIFAFDNTCHNRELVLDSNIISHTTCEQLINLMKNLSGSIMYLLEQQREQTSNETKERYKEILGGYGNA.

It belongs to the GtfB family. As to quaternary structure, interacts with glycosyltransferase GtfA (Gtf1). Interacts with glycosyltransferase GtfA; probably forms a heterotetramer with 2 subunits each of GtfA and GtfB. Part of the accessory SecA2/SecY2 protein translocation apparatus.

The protein resides in the cell membrane. Its pathway is protein modification; protein glycosylation. Functionally, required for the polymorphic O-glycosylation of the serine-rich repeat protein Srr2. A stabilizing protein that is part of the accessory SecA2/SecY2 system specifically required to export serine-rich repeat proteins, probably Srr2 in this organism. The GtfA-GtfB (Gtf1-Gtf2 in this bacteria) complex adds GlcNAc from UDP-GlcNAc to Srr2 substrate, attaching the first sugar residue. Stabilizes the glycosylation activity of GtfA in vivo. Upon expression in a gtfB deletion mutant of S.parasanguis, GtfB confers incorrect glycosylation and partial complementation of a biofilm formation defect, while GtfA/GtfB restores correct expression of serine-rich repeat protein Fap1 and completely restores a biofilm formation defect in a S.parasanguis double gtfA-gtfB deletion. The sequence is that of UDP-N-acetylglucosamine--peptide N-acetylglucosaminyltransferase stabilizing protein GtfB from Streptococcus agalactiae.